The primary structure comprises 598 residues: Aspartate--tRNA(Asp/Asn) ligase (598 aa).

Glu177 serves as a coordination point for L-aspartate. Positions 201–204 (QLFK) are aspartate. An L-aspartate-binding site is contributed by Arg223. ATP is bound by residues 223 to 225 (RDE) and Gln232. His456 contributes to the L-aspartate binding site. Residue Glu493 coordinates ATP. Residue Arg500 coordinates L-aspartate. Residue 545–548 (GLDR) participates in ATP binding.

This sequence belongs to the class-II aminoacyl-tRNA synthetase family. Type 1 subfamily. Homodimer.

It localises to the cytoplasm. The enzyme catalyses tRNA(Asx) + L-aspartate + ATP = L-aspartyl-tRNA(Asx) + AMP + diphosphate. Functionally, aspartyl-tRNA synthetase with relaxed tRNA specificity since it is able to aspartylate not only its cognate tRNA(Asp) but also tRNA(Asn). Reaction proceeds in two steps: L-aspartate is first activated by ATP to form Asp-AMP and then transferred to the acceptor end of tRNA(Asp/Asn). In Prochlorococcus marinus (strain MIT 9301), this protein is Aspartate--tRNA(Asp/Asn) ligase.